An 80-amino-acid chain; its full sequence is Large ribosomal subunit protein bL31B (80 aa).

This sequence belongs to the bacterial ribosomal protein bL31 family. Type B subfamily. In terms of assembly, part of the 50S ribosomal subunit.

The polypeptide is Large ribosomal subunit protein bL31B (Shouchella clausii (strain KSM-K16) (Alkalihalobacillus clausii)).